Here is a 93-residue protein sequence, read N- to C-terminus: HIG1 domain family member 1A, mitochondrial (93 aa).

Position 2 is an N-acetylserine (serine 2). The region spanning 2–93 is the HIG1 domain; sequence STNTDLSLSS…YQEFWAKRKP (92 aa). Serine 8 carries the post-translational modification Phosphoserine. A run of 2 helical transmembrane segments spans residues 28-48 and 69-89; these read PFVP…LYKL and GFVV…EFWA. The Mitochondrial matrix segment spans residues 90–93; sequence KRKP.

Associates with cytochrome c oxidase (COX, complex IV); proposed complex component. Also associates with respiratory chain supercomplexes. As to expression, expressed in brain and spinal cord.

Its subcellular location is the mitochondrion membrane. The protein resides in the mitochondrion inner membrane. Proposed subunit of cytochrome c oxidase (COX, complex IV), which is the terminal component of the mitochondrial respiratory chain that catalyzes the reduction of oxygen to water. May play a role in the assembly of respiratory supercomplexes. The polypeptide is HIG1 domain family member 1A, mitochondrial (Higd1a) (Rattus norvegicus (Rat)).